A 347-amino-acid polypeptide reads, in one-letter code: Ketol-acid reductoisomerase (NADP(+)) (347 aa).

The KARI N-terminal Rossmann domain occupies 3-182 (TKMFYDKDID…GSGRAGILET (180 aa)). NADP(+) is bound by residues 26–29 (YGAQ), R49, S53, and 83–86 (DELQ). Residue H108 is part of the active site. G134 lines the NADP(+) pocket. Residues 183 to 328 (TFEEETTEDL…KKVRAMMPWI (146 aa)) form the KARI C-terminal knotted domain. D191, E195, E227, and E231 together coordinate Mg(2+). S252 serves as a coordination point for substrate.

The protein belongs to the ketol-acid reductoisomerase family. The cofactor is Mg(2+).

The enzyme catalyses (2R)-2,3-dihydroxy-3-methylbutanoate + NADP(+) = (2S)-2-acetolactate + NADPH + H(+). It carries out the reaction (2R,3R)-2,3-dihydroxy-3-methylpentanoate + NADP(+) = (S)-2-ethyl-2-hydroxy-3-oxobutanoate + NADPH + H(+). It functions in the pathway amino-acid biosynthesis; L-isoleucine biosynthesis; L-isoleucine from 2-oxobutanoate: step 2/4. Its pathway is amino-acid biosynthesis; L-valine biosynthesis; L-valine from pyruvate: step 2/4. Involved in the biosynthesis of branched-chain amino acids (BCAA). Catalyzes an alkyl-migration followed by a ketol-acid reduction of (S)-2-acetolactate (S2AL) to yield (R)-2,3-dihydroxy-isovalerate. In the isomerase reaction, S2AL is rearranged via a Mg-dependent methyl migration to produce 3-hydroxy-3-methyl-2-ketobutyrate (HMKB). In the reductase reaction, this 2-ketoacid undergoes a metal-dependent reduction by NADPH to yield (R)-2,3-dihydroxy-isovalerate. The polypeptide is Ketol-acid reductoisomerase (NADP(+)) (Leuconostoc mesenteroides subsp. mesenteroides (strain ATCC 8293 / DSM 20343 / BCRC 11652 / CCM 1803 / JCM 6124 / NCDO 523 / NBRC 100496 / NCIMB 8023 / NCTC 12954 / NRRL B-1118 / 37Y)).